A 485-amino-acid polypeptide reads, in one-letter code: Glutamyl-tRNA(Gln) amidotransferase subunit A (485 aa).

Catalysis depends on charge relay system residues K74 and S149. The active-site Acyl-ester intermediate is S173.

Belongs to the amidase family. GatA subfamily. Heterotrimer of A, B and C subunits.

It catalyses the reaction L-glutamyl-tRNA(Gln) + L-glutamine + ATP + H2O = L-glutaminyl-tRNA(Gln) + L-glutamate + ADP + phosphate + H(+). Its function is as follows. Allows the formation of correctly charged Gln-tRNA(Gln) through the transamidation of misacylated Glu-tRNA(Gln) in organisms which lack glutaminyl-tRNA synthetase. The reaction takes place in the presence of glutamine and ATP through an activated gamma-phospho-Glu-tRNA(Gln). This chain is Glutamyl-tRNA(Gln) amidotransferase subunit A, found in Janthinobacterium sp. (strain Marseille) (Minibacterium massiliensis).